Reading from the N-terminus, the 549-residue chain is Myotubularin-related protein 9 (549 aa).

M1 is subject to N-acetylmethionine. Residues 4 to 99 (AELIKTPRVD…LNIASSIEAL (96 aa)) enclose the GRAM domain. The 376-residue stretch at 123-498 (GWHSFLPEQE…QSLPLWEGIF (376 aa)) folds into the Myotubularin phosphatase domain. Residues 508–542 (LDEAYEEMVNIIEYNKELQAKVNILRRQLAELETE) adopt a coiled-coil conformation. The residue at position 548 (S548) is a Phosphoserine.

The protein belongs to the protein-tyrosine phosphatase family. Non-receptor class myotubularin subfamily. In terms of assembly, homodimer. Heterodimer (via C-terminus) with lipid phosphatase MTMR6 (via C-terminus). Heterodimer (via coiled coil domain) with lipid phosphatase MTMR7 (via C-terminus). Heterodimer with lipid phosphatase MTMR8. Expressed in many tissues.

It localises to the cytoplasm. It is found in the cell projection. The protein resides in the ruffle membrane. Its subcellular location is the perinuclear region. The protein localises to the endoplasmic reticulum. Acts as an adapter for myotubularin-related phosphatases. Increases lipid phosphatase MTMR6 catalytic activity, specifically towards phosphatidylinositol 3,5-bisphosphate and MTMR6 binding affinity for phosphorylated phosphatidylinositols. Positively regulates lipid phosphatase MTMR7 catalytic activity. Increases MTMR8 catalytic activity towards phosphatidylinositol 3-phosphate. The formation of the MTMR6-MTMR9 complex, stabilizes both MTMR6 and MTMR9 protein levels. Stabilizes MTMR8 protein levels. Plays a role in the late stages of macropinocytosis possibly by regulating MTMR6-mediated dephosphorylation of phosphatidylinositol 3-phosphate in membrane ruffles. Negatively regulates autophagy, in part via its association with MTMR8. Negatively regulates DNA damage-induced apoptosis, in part via its association with MTMR6. Does not bind mono-, di- and tri-phosphorylated phosphatidylinositols, phosphatidic acid and phosphatidylserine. This Homo sapiens (Human) protein is Myotubularin-related protein 9 (MTMR9).